Here is a 90-residue protein sequence, read N- to C-terminus: MSRSTKKAPFVHEGLFKKIEEMNGNGEKKVVKTWSRSSTIFPQFIGHTIAVHDGRKHVPVYVSEDMVGHKLGEFVLTRTYKGHDDKTSKR.

It belongs to the universal ribosomal protein uS19 family.

Functionally, protein S19 forms a complex with S13 that binds strongly to the 16S ribosomal RNA. The chain is Small ribosomal subunit protein uS19 from Clostridium beijerinckii (strain ATCC 51743 / NCIMB 8052) (Clostridium acetobutylicum).